A 116-amino-acid polypeptide reads, in one-letter code: Large ribosomal subunit protein uL18 (116 aa).

Belongs to the universal ribosomal protein uL18 family. As to quaternary structure, part of the 50S ribosomal subunit; part of the 5S rRNA/L5/L18/L25 subcomplex. Contacts the 5S and 23S rRNAs.

Its function is as follows. This is one of the proteins that bind and probably mediate the attachment of the 5S RNA into the large ribosomal subunit, where it forms part of the central protuberance. This chain is Large ribosomal subunit protein uL18, found in Shewanella denitrificans (strain OS217 / ATCC BAA-1090 / DSM 15013).